Consider the following 258-residue polypeptide: MKITKIEKKKRLYLIELDNDDSLYVTEDTIVRFMLSKDKVLDNDQLEDMKHFAQLSYGKNLALYFLSFQQRSNKQVADYLRKHEIEEHIIADIITQLQEEQWIDDTKLADTYIRQNQLNGDKGPQVLKQKLLQKGIASHDIDPILSQTDFSQLAQKVSQKLFDKYQEKLPPKALKDKITQALLTKGFSYDLAKHSLNHLNFDQNNQEIEDLLDKELDKQYRKLSRKYDGYTLKQKLYQALYRKGYNSDDINCKLRNYL.

It belongs to the RecX family.

The protein localises to the cytoplasm. Functionally, modulates RecA activity. In Streptococcus pyogenes serotype M3 (strain ATCC BAA-595 / MGAS315), this protein is Regulatory protein RecX.